A 316-amino-acid chain; its full sequence is Actinorhodin polyketide synthase bifunctional cyclase/dehydratase (316 aa).

Its pathway is antibiotic biosynthesis; actinorhodin biosynthesis. Is needed for correct cyclization of the oligoketide leading to isochromanequinone formation. In Streptomyces coelicolor (strain ATCC BAA-471 / A3(2) / M145), this protein is Actinorhodin polyketide synthase bifunctional cyclase/dehydratase.